A 212-amino-acid chain; its full sequence is TATA-box-binding protein 2 (212 aa).

Repeat copies occupy residues 30 to 114 and 120 to 201.

The protein belongs to the TBP family. In terms of assembly, belongs to the TFIID complex together with the TBP-associated factors (TAFs). Binds DNA as monomer.

It is found in the nucleus. Its function is as follows. General transcription factor that functions at the core of the DNA-binding multiprotein factor TFIID. Binding of TFIID to the TATA box is the initial transcriptional step of the pre-initiation complex (PIC), playing a role in the activation of eukaryotic genes transcribed by RNA polymerase II. The chain is TATA-box-binding protein 2 from Entamoeba histolytica (strain ATCC 30459 / HM-1:IMSS / ABRM).